Reading from the N-terminus, the 134-residue chain is C-C motif chemokine 21 (134 aa).

A signal peptide spans 1–23 (MAQSLALSLLILVLAFGIPRTQG). 3 disulfides stabilise this stretch: Cys31/Cys57, Cys32/Cys75, and Cys103/Cys122. The tract at residues 88 to 134 (QHLDKTPSPQKPAQGCRKDRGASKTGKKGKGSKGCKRTERSQTPKGP) is disordered. Positions 98–134 (KPAQGCRKDRGASKTGKKGKGSKGCKRTERSQTPKGP) are C-terminal basic extension. Basic residues predominate over residues 112-122 (TGKKGKGSKGC). The segment covering 123–134 (KRTERSQTPKGP) has biased composition (basic and acidic residues).

This sequence belongs to the intercrine beta (chemokine CC) family. Monomer. Binds to CCR7. Interacts with PDPN; relocalizes PDPN to the basolateral membrane. Interacts with TNFAIP6 (via Link domain). Interacts with GPR174. In terms of tissue distribution, highly expressed in high endothelial venules of lymph nodes, spleen and appendix. Intermediate levels found in small intestine, thyroid gland and trachea. Low level expression in thymus, bone marrow, liver, and pancreas. Also found in tonsil, fetal heart and fetal spleen.

The protein resides in the secreted. Inhibits hemopoiesis and stimulates chemotaxis. Chemotactic in vitro for thymocytes and activated T-cells, but not for B-cells, macrophages, or neutrophils. Shows preferential activity towards naive T-cells. May play a role in mediating homing of lymphocytes to secondary lymphoid organs. Binds to atypical chemokine receptor ACKR4 and mediates the recruitment of beta-arrestin (ARRB1/2) to ACKR4. In Homo sapiens (Human), this protein is C-C motif chemokine 21 (CCL21).